Reading from the N-terminus, the 307-residue chain is MRDALGREVRSVRISVTMRCNMACVYCHREGERPGRSELSAAEWGRLLRACAEIGVRKVKITGGEPLLRRDLIEIIENAEGFEEVSLVTNGVLLADYAGDLAEAGLDRVNVSLDTVDRKLYRKLTRSRFSPDDVIRGIEAAVSEGLTPVKVNVVLTSETVKTLPTLVEELADLEGLKLQLIEPMGSIPGFRPAHAEDGLRALGEYEPELERVRTFHSREVYRLNNGMAVEVVKPMDGVMCEACTRIRLTHDGKYKGCLMAPPKPLPRDDFGELVRTLKEYVRTRDDTFEVHQGTSVMGRMRGDVSGR.

The Radical SAM core domain maps to 4–222; it reads ALGREVRSVR…RTFHSREVYR (219 aa). Residue Arg13 participates in GTP binding. The [4Fe-4S] cluster site is built by Cys20 and Cys24. Tyr26 serves as a coordination point for S-adenosyl-L-methionine. Residue Cys27 participates in [4Fe-4S] cluster binding. Lys60 contacts GTP. Residues Gly64 and Ser112 each contribute to the S-adenosyl-L-methionine site. Lys150 serves as a coordination point for GTP. Positions 240 and 243 each coordinate [4Fe-4S] cluster. 245–247 is a binding site for GTP; it reads RIR. Residue Cys257 participates in [4Fe-4S] cluster binding.

It belongs to the radical SAM superfamily. MoaA family. Requires [4Fe-4S] cluster as cofactor.

It catalyses the reaction GTP + AH2 + S-adenosyl-L-methionine = (8S)-3',8-cyclo-7,8-dihydroguanosine 5'-triphosphate + 5'-deoxyadenosine + L-methionine + A + H(+). Its pathway is cofactor biosynthesis; molybdopterin biosynthesis. Catalyzes the cyclization of GTP to (8S)-3',8-cyclo-7,8-dihydroguanosine 5'-triphosphate. The sequence is that of Probable GTP 3',8-cyclase from Methanopyrus kandleri (strain AV19 / DSM 6324 / JCM 9639 / NBRC 100938).